The sequence spans 466 residues: Ribulose bisphosphate carboxylase large chain (466 aa).

N6,N6,N6-trimethyllysine is present on Lys-5. Residues Asn-114 and Thr-164 each coordinate substrate. Lys-166 functions as the Proton acceptor in the catalytic mechanism. Substrate is bound at residue Lys-168. Positions 192, 194, and 195 each coordinate Mg(2+). Residue Lys-192 is modified to N6-carboxylysine. Catalysis depends on His-285, which acts as the Proton acceptor. Substrate contacts are provided by Arg-286, His-318, and Ser-370.

This sequence belongs to the RuBisCO large chain family. Type I subfamily. As to quaternary structure, heterohexadecamer of 8 large chains and 8 small chains; disulfide-linked. The disulfide link is formed within the large subunit homodimers. Requires Mg(2+) as cofactor. The disulfide bond which can form in the large chain dimeric partners within the hexadecamer appears to be associated with oxidative stress and protein turnover.

The protein resides in the plastid. Its subcellular location is the chloroplast. It catalyses the reaction 2 (2R)-3-phosphoglycerate + 2 H(+) = D-ribulose 1,5-bisphosphate + CO2 + H2O. The catalysed reaction is D-ribulose 1,5-bisphosphate + O2 = 2-phosphoglycolate + (2R)-3-phosphoglycerate + 2 H(+). Functionally, ruBisCO catalyzes two reactions: the carboxylation of D-ribulose 1,5-bisphosphate, the primary event in carbon dioxide fixation, as well as the oxidative fragmentation of the pentose substrate in the photorespiration process. Both reactions occur simultaneously and in competition at the same active site. The chain is Ribulose bisphosphate carboxylase large chain from Poliothyrsis sinensis (Chinese pearlbloom tree).